A 565-amino-acid polypeptide reads, in one-letter code: Granule-bound starch synthase 1b, chloroplastic/amyloplastic (565 aa).

Residues 1–34 constitute a chloroplast transit peptide; the sequence is VFLSMRNKTQLAKRRATNYETHRNSSRTSSPIVC. Lys52 is a binding site for ADP-alpha-D-glucose.

Belongs to the glycosyltransferase 1 family. Bacterial/plant glycogen synthase subfamily.

Its subcellular location is the plastid. The protein resides in the chloroplast. It localises to the amyloplast. The catalysed reaction is an NDP-alpha-D-glucose + [(1-&gt;4)-alpha-D-glucosyl](n) = [(1-&gt;4)-alpha-D-glucosyl](n+1) + a ribonucleoside 5'-diphosphate + H(+). Its pathway is glycan biosynthesis; starch biosynthesis. Its function is as follows. Involved in the synthesis of amylose in endosperm. The sequence is that of Granule-bound starch synthase 1b, chloroplastic/amyloplastic from Hordeum vulgare (Barley).